Consider the following 278-residue polypeptide: Replication protein A 32 kDa subunit B (278 aa).

The segment at residues 70 to 143 (VVIVGRISRM…RSVNVFSVRP (74 aa)) is a DNA-binding region (OB).

Belongs to the replication factor A protein 2 family. Heterotrimer of RPA1, RPA2 and RPA3 (canonical replication protein A complex). Phosphorylated in a cell-cycle-dependent manner (from the S phase until mitosis). In response to DNA damage, recruited to DNA-repair nuclear foci, as a hypophosphorylated form.

The protein resides in the nucleus. In terms of biological role, component of the replication protein A complex (RPA) required for DNA recombination, repair and replication. The activity of RPA is mediated by single-stranded DNA binding and protein interactions. Required fo cell division in meristems. Involved in the maintenance of transcriptional epigenetic gene silencing (TGS) at specific loci (including some transposons) by regulating histone H3 acetylation, 'Lys-4' and 'Lys-9' methylation. The polypeptide is Replication protein A 32 kDa subunit B (RPA2B) (Arabidopsis thaliana (Mouse-ear cress)).